The sequence spans 123 residues: Molluscan insulin-related peptide 1 (123 aa).

The first 31 residues, 1–31 (MAGVRLVFTKAFMVTVLLTLLLNIGVKPAEG), serve as a signal peptide directing secretion. Gln32 carries the pyrrolidone carboxylic acid modification. 3 disulfide bridges follow: Cys48/Cys109, Cys60/Cys122, and Cys108/Cys113. A propeptide spanning residues 68 to 69 (MV) is cleaved from the precursor. At Gln99 the chain carries Pyrrolidone carboxylic acid.

This sequence belongs to the insulin family. Heterodimer of a B chain and an A chain linked by two disulfide bonds. In terms of tissue distribution, expressed in the cerebral light-green cells which are giant neuroendocrines cells involved in the control of growth.

Its subcellular location is the cytoplasmic vesicle. The protein localises to the secretory vesicle. This is Molluscan insulin-related peptide 1 from Lymnaea stagnalis (Great pond snail).